The chain runs to 319 residues: Thiamine-monophosphate kinase (319 aa).

Residues aspartate 28, threonine 43, threonine 44, and aspartate 45 each coordinate Mg(2+). Residue histidine 52 participates in substrate binding. Aspartate 73 lines the Mg(2+) pocket. Residues tyrosine 104, 121–122 (GD), and arginine 145 each bind ATP. A Mg(2+)-binding site is contributed by aspartate 122. Aspartate 218 serves as a coordination point for Mg(2+). Serine 220 contributes to the ATP binding site. Aspartate 221 provides a ligand contact to Mg(2+). Substrate is bound by residues glutamate 268 and tyrosine 315.

This sequence belongs to the thiamine-monophosphate kinase family.

The enzyme catalyses thiamine phosphate + ATP = thiamine diphosphate + ADP. The protein operates within cofactor biosynthesis; thiamine diphosphate biosynthesis; thiamine diphosphate from thiamine phosphate: step 1/1. Its function is as follows. Catalyzes the ATP-dependent phosphorylation of thiamine-monophosphate (TMP) to form thiamine-pyrophosphate (TPP), the active form of vitamin B1. This chain is Thiamine-monophosphate kinase, found in Methanocaldococcus jannaschii (strain ATCC 43067 / DSM 2661 / JAL-1 / JCM 10045 / NBRC 100440) (Methanococcus jannaschii).